Reading from the N-terminus, the 301-residue chain is MKSNPAIQAAIDLTAGAAGGTACVLTGQPFDTMKVKMQTFPDLYRGLTDCCLKTYSQVGFRGFYKGTSPALIANIAENSVLFMCYGFCQQVVRKVVGLDQQAKLSDLQNAAAGSFASAFAALVLCPTELVKCRLQTMYEMETSGKIAASQNTVWSVVKEIFRKDGPLGFYHGLSSTLLREVPGYFFFFGGYELSRSFFASGRSKDELGPVPLMLSGGFGGICLWLAVYPVDCIKSRIQVLSMTGKQTGLVRTFLSIVKNEGITALYSGLKPTMIRAFPANGALFLAYEYSRKLMMNQLEAW.

The next 6 helical transmembrane spans lie at 5–25 (PAIQ…ACVL), 68–88 (SPAL…YGFC), 110–130 (AAAG…TELV), 168–188 (GFYH…FFFF), 207–227 (LGPV…WLAV), and 237–257 (IQVL…LSIV). Solcar repeat units lie at residues 7–91 (IQAA…CQQV), 104–197 (LSDL…SRSF), and 207–293 (LGPV…SRKL).

The protein belongs to the mitochondrial carrier (TC 2.A.29) family. Widely expressed, with highest levels in the liver, testis and kidney. In the brain, expressed at high levels in the hypothalamus.

The protein localises to the mitochondrion inner membrane. It is found in the mitochondrion membrane. The catalysed reaction is L-citrulline(in) + L-ornithine(out) + H(+)(in) = L-citrulline(out) + L-ornithine(in) + H(+)(out). The enzyme catalyses L-ornithine(in) + L-arginine(out) = L-ornithine(out) + L-arginine(in). It carries out the reaction L-ornithine(out) + L-lysine(in) = L-ornithine(in) + L-lysine(out). It catalyses the reaction L-lysine(out) + H(+)(in) = L-lysine(in) + H(+)(out). The catalysed reaction is L-ornithine(out) + H(+)(in) = L-ornithine(in) + H(+)(out). With respect to regulation, inhibited by pyridoxal 5'-phosphate as well as by mercurials (mersalyl, p-chloromercuribenzene sulfonate, and mercuric chloride), N-ethylmaleimide and spermine. Functionally, mitochondrial ornithine-citrulline antiporter. Catalyzes the exchange between cytosolic ornithine and mitochondrial citrulline plus an H(+), the proton compensates the positive charge of ornithine thus leading to an electroneutral transport. Plays a crucial role in the urea cycle, by connecting the cytosolic and the intramitochondrial reactions of the urea cycle. Lysine and arginine are also transported by the antiport mechanism. In addition, catalyzes an electroneutral exchange of ornithine or lysine for H(+), a reaction driven by the pH gradient across the inner membrane. In Mus musculus (Mouse), this protein is Mitochondrial ornithine transporter 1.